The primary structure comprises 104 residues: Large ribosomal subunit protein uL24 (104 aa).

Belongs to the universal ribosomal protein uL24 family. In terms of assembly, part of the 50S ribosomal subunit.

Functionally, one of two assembly initiator proteins, it binds directly to the 5'-end of the 23S rRNA, where it nucleates assembly of the 50S subunit. One of the proteins that surrounds the polypeptide exit tunnel on the outside of the subunit. The protein is Large ribosomal subunit protein uL24 of Neorickettsia sennetsu (strain ATCC VR-367 / Miyayama) (Ehrlichia sennetsu).